A 142-amino-acid polypeptide reads, in one-letter code: Hemoglobin subunit alpha (142 aa).

Ser-1 bears the N-acetylserine mark. The Globin domain maps to Ser-1–Arg-142. His-59 contributes to the O2 binding site. Position 88 (His-88) interacts with heme b.

The protein belongs to the globin family. Heterotetramer of two alpha chains and two beta chains. In terms of tissue distribution, red blood cells.

Involved in oxygen transport from gills to the various peripheral tissues. In Electrophorus electricus (Electric eel), this protein is Hemoglobin subunit alpha (hba).